The primary structure comprises 380 residues: MAKADFYETLGVSKTADEKELKSAFRKLAMKFHPDKNPGDAESERKFKEINEAYETLKDPQKRAAYDRFGHAAFEQGGMGSAGGGGGFAGGGFSDIFEDIFGEMMGGGRGGNARGRSTGGRERGADLRYNMEISLEEAFTGKTAQIRVPTSITCEVCSGSGAKPGTKPTTCATCQGSGRVRAAQGFFSIERTCPTCQGRGQTISDPCGKCHGQGRVTEERQLSVSIPSGIEDGTRIRLQGEGEAGLRGGPSGDLYIFLSVKPHQFFQREGADLYCSVPISMTTAALGGTFDVTTLDGTKSRVTVPEGTQPGKQFRLKGKGMPVLRSAQMGDLYIQIQIETPQKLTKRQRELLQEFDQISSKENNPESTGFFARMKEFFEG.

Residues 5 to 70 (DFYETLGVSK…QKRAAYDRFG (66 aa)) form the J domain. Residues 141 to 219 (GKTAQIRVPT…CHGQGRVTEE (79 aa)) form a CR-type zinc finger. Residues Cys154, Cys157, Cys171, Cys174, Cys193, Cys196, Cys207, and Cys210 each coordinate Zn(2+). CXXCXGXG motif repeat units lie at residues 154–161 (CEVCSGSG), 171–178 (CATCQGSG), 193–200 (CPTCQGRG), and 207–214 (CGKCHGQG).

This sequence belongs to the DnaJ family. As to quaternary structure, homodimer. The cofactor is Zn(2+).

The protein localises to the cytoplasm. In terms of biological role, participates actively in the response to hyperosmotic and heat shock by preventing the aggregation of stress-denatured proteins and by disaggregating proteins, also in an autonomous, DnaK-independent fashion. Unfolded proteins bind initially to DnaJ; upon interaction with the DnaJ-bound protein, DnaK hydrolyzes its bound ATP, resulting in the formation of a stable complex. GrpE releases ADP from DnaK; ATP binding to DnaK triggers the release of the substrate protein, thus completing the reaction cycle. Several rounds of ATP-dependent interactions between DnaJ, DnaK and GrpE are required for fully efficient folding. Also involved, together with DnaK and GrpE, in the DNA replication of plasmids through activation of initiation proteins. The chain is Chaperone protein DnaJ from Allorhizobium ampelinum (strain ATCC BAA-846 / DSM 112012 / S4) (Agrobacterium vitis (strain S4)).